The following is an 85-amino-acid chain: Colicin-E8 immunity protein in ColE6 (85 aa).

The protein belongs to the colicins ColE2/ColE8/ColE9 and pyocins S1/S2 family.

This is Colicin-E8 immunity protein in ColE6 (imm) from Escherichia coli.